The primary structure comprises 849 residues: SMY2 homolog 2 (849 aa).

A GYF domain is found at Glu-149–Gly-205. Disordered stretches follow at residues Ala-305–Leu-505, Asp-527–Arg-547, Thr-593–Asp-612, and Asn-634–Asn-661. Residues Ser-308–Thr-318 are compositionally biased toward low complexity. The segment covering Ser-319 to Ala-331 has biased composition (basic and acidic residues). Thr-350 is subject to Phosphothreonine. Basic and acidic residues-rich tracts occupy residues Thr-361–Asn-375, Val-387–Asp-403, and Leu-425–Arg-443. A coiled-coil region spans residues Glu-410–Ile-484. A compositionally biased stretch (basic residues) spans Lys-444–Gln-455. The span at Lys-456–Glu-479 shows a compositional bias: basic and acidic residues. A compositionally biased stretch (polar residues) spans Asn-483–Leu-505. Positions Lys-594–Asn-605 are enriched in polar residues. Residues Ser-644 to Asn-661 are compositionally biased toward low complexity.

Belongs to the SMY2/mpd2 family. As to quaternary structure, interacts with ribosomes. Interacts with EAP1 and MSL5 (via the GYP domain).

It is found in the cytoplasm. This chain is SMY2 homolog 2 (SYH1), found in Saccharomyces cerevisiae (strain ATCC 204508 / S288c) (Baker's yeast).